The following is a 170-amino-acid chain: Two-component response regulator ORR6 (170 aa).

The Response regulatory domain maps to 51-170; that stretch reads HVLAVDDSSV…DVSRLCSRIR (120 aa). At Asp103 the chain carries 4-aspartylphosphate.

It belongs to the ARR family. Type-A subfamily. Two-component system major event consists of a His-to-Asp phosphorelay between a sensor histidine kinase (HK) and a response regulator (RR). In plants, the His-to-Asp phosphorelay involves an additional intermediate named Histidine-containing phosphotransfer protein (HPt). This multistep phosphorelay consists of a His-Asp-His-Asp sequential transfer of a phosphate group between first a His and an Asp of the HK protein, followed by the transfer to a conserved His of the HPt protein and finally the transfer to an Asp in the receiver domain of the RR protein. As to expression, expressed in roots, leaf blades, leaf sheaths, shoot apex, flowers and panicles.

Its function is as follows. Functions as a response regulator involved in His-to-Asp phosphorelay signal transduction system. Phosphorylation of the Asp residue in the receiver domain activates the ability of the protein to promote the transcription of target genes. Type-A response regulators seem to act as negative regulators of the cytokinin signaling. This chain is Two-component response regulator ORR6, found in Oryza sativa subsp. japonica (Rice).